The chain runs to 248 residues: MGQKIHPHGLRLGITSDWKSHWYADKSYADYVAEDIKIREFLSKGLDRAGIADVVIERTRDRVRVDIHTARPGIVIGRRGAEADRIRRELEKLTGKQVALNILEVKNVDANAKLVAQSIAEQLTNRVAFRRAMRKAIQSAMRQPQVKGIKVVCSGRLGGAEMSRTERYHEGRVPLHTLRAEIDYGTYEAHTTFGRIGVKVWIYKGDVVGGRRESEINAPAERRGRGDRNARPRRGGQRRQRAEQKQEG.

In terms of domain architecture, KH type-2 spans I38–K106. The span at S214–A230 shows a compositional bias: basic and acidic residues. Residues S214–G248 are disordered.

It belongs to the universal ribosomal protein uS3 family. As to quaternary structure, part of the 30S ribosomal subunit. Forms a tight complex with proteins S10 and S14.

Binds the lower part of the 30S subunit head. Binds mRNA in the 70S ribosome, positioning it for translation. The polypeptide is Small ribosomal subunit protein uS3 (Corynebacterium glutamicum (strain R)).